A 565-amino-acid chain; its full sequence is Deoxyribodipyrimidine photo-lyase, mitochondrial (565 aa).

Positions 75-226 (STVMHWFRND…QLKYYHDSCI (152 aa)) constitute a Photolyase/cryptochrome alpha/beta domain. FAD-binding positions include Tyr326 and 338 to 342 (TSGLS). Interaction with DNA regions lie at residues 384–391 (EVAWRDFY) and 451–452 (NR). Residue 482–484 (DGD) coordinates FAD. DNA is bound at residue Gln514.

It belongs to the DNA photolyase class-1 family. As to quaternary structure, monomer. FAD is required as a cofactor. (6R)-5,10-methylene-5,6,7,8-tetrahydrofolate serves as cofactor.

The protein localises to the nucleus. Its subcellular location is the mitochondrion. The catalysed reaction is cyclobutadipyrimidine (in DNA) = 2 pyrimidine residues (in DNA).. Involved in repair of UV radiation-induced DNA damage. Catalyzes the light-dependent monomerization (300-600 nm) of cyclobutyl pyrimidine dimers (in cis-syn configuration), which are formed between adjacent bases on the same DNA strand upon exposure to ultraviolet radiation. The polypeptide is Deoxyribodipyrimidine photo-lyase, mitochondrial (PHR1) (Saccharomyces cerevisiae (strain ATCC 204508 / S288c) (Baker's yeast)).